Consider the following 170-residue polypeptide: Probable inactive uracil-DNA glycosylase, mitochondrial (170 aa).

A mitochondrion-targeting transit peptide spans 1–53; the sequence is MALSTPKTLMDFFQPAKRLKASPSSSSSFPAVSVAGRSRDLGSVANSPPRVTV.

Belongs to the uracil-DNA glycosylase (UDG) superfamily. UNG family.

Its subcellular location is the mitochondrion. In terms of biological role, probable inactive paralog of AtUNG (AC Q9LIH6) generated by a gene duplication event and subsequently disrupted by at least two transposon insertions. This is Probable inactive uracil-DNA glycosylase, mitochondrial from Arabidopsis thaliana (Mouse-ear cress).